A 738-amino-acid polypeptide reads, in one-letter code: 1,4-alpha-glucan branching enzyme GlgB (738 aa).

Catalysis depends on D399, which acts as the Nucleophile. E452 functions as the Proton donor in the catalytic mechanism.

The protein belongs to the glycosyl hydrolase 13 family. GlgB subfamily. As to quaternary structure, monomer.

It carries out the reaction Transfers a segment of a (1-&gt;4)-alpha-D-glucan chain to a primary hydroxy group in a similar glucan chain.. The protein operates within glycan biosynthesis; glycogen biosynthesis. Catalyzes the formation of the alpha-1,6-glucosidic linkages in glycogen by scission of a 1,4-alpha-linked oligosaccharide from growing alpha-1,4-glucan chains and the subsequent attachment of the oligosaccharide to the alpha-1,6 position. The protein is 1,4-alpha-glucan branching enzyme GlgB of Chlamydia trachomatis serovar A (strain ATCC VR-571B / DSM 19440 / HAR-13).